The chain runs to 239 residues: Ribosomal RNA small subunit methyltransferase G (239 aa).

S-adenosyl-L-methionine is bound by residues Gly-77, Phe-82, 128–129, and Arg-147; that span reads AE. The segment at 219 to 239 is disordered; it reads KNTPKKYPRKPGTPNKSPIEG.

Belongs to the methyltransferase superfamily. RNA methyltransferase RsmG family.

The protein localises to the cytoplasm. Functionally, specifically methylates the N7 position of guanine in position 535 of 16S rRNA. The polypeptide is Ribosomal RNA small subunit methyltransferase G (Bacillus subtilis (strain 168)).